We begin with the raw amino-acid sequence, 243 residues long: 2,3-bisphosphoglycerate-dependent phosphoglycerate mutase (243 aa).

Substrate-binding positions include 8-15, 21-22, R60, 87-90, K98, 114-115, and 183-184; these read RHGQSEWN, TG, ERHY, RR, and GN. H9 functions as the Tele-phosphohistidine intermediate in the catalytic mechanism. Residue E87 is the Proton donor/acceptor of the active site.

It belongs to the phosphoglycerate mutase family. BPG-dependent PGAM subfamily.

The enzyme catalyses (2R)-2-phosphoglycerate = (2R)-3-phosphoglycerate. Its pathway is carbohydrate degradation; glycolysis; pyruvate from D-glyceraldehyde 3-phosphate: step 3/5. Its function is as follows. Catalyzes the interconversion of 2-phosphoglycerate and 3-phosphoglycerate. The polypeptide is 2,3-bisphosphoglycerate-dependent phosphoglycerate mutase (Clostridium acetobutylicum (strain ATCC 824 / DSM 792 / JCM 1419 / IAM 19013 / LMG 5710 / NBRC 13948 / NRRL B-527 / VKM B-1787 / 2291 / W)).